A 184-amino-acid chain; its full sequence is Large ribosomal subunit protein uL6 (184 aa).

The protein belongs to the universal ribosomal protein uL6 family. As to quaternary structure, part of the 50S ribosomal subunit.

Its function is as follows. This protein binds to the 23S rRNA, and is important in its secondary structure. It is located near the subunit interface in the base of the L7/L12 stalk, and near the tRNA binding site of the peptidyltransferase center. The protein is Large ribosomal subunit protein uL6 of Thermococcus onnurineus (strain NA1).